An 829-amino-acid chain; its full sequence is DNA topoisomerase 1 (829 aa).

Residues 1–248 (MSEDHVQNDS…AKGNEEGVKK (248 aa)) are disordered. Over residues 22 to 36 (HKHKKDKEHRHKEHK) the composition is skewed to basic residues. 3 stretches are compositionally biased toward basic and acidic residues: residues 37–58 (KDKD…SEKK), 68–159 (KHRE…EKMK), and 193–220 (KENK…DDKK). Interaction with DNA stretches follow at residues 481 to 482 (KY), 544 to 549 (RAGNEK), and 641 to 643 (TAK). Positions 488–821 (SSRIKGEKDW…SIWQTTTSNF (334 aa)) constitute a Topo IB-type catalytic domain. Catalysis depends on Tyr-779, which acts as the O-(3'-phospho-DNA)-tyrosine intermediate.

The protein belongs to the type IB topoisomerase family. As to quaternary structure, monomer.

Its subcellular location is the nucleus. It carries out the reaction ATP-independent breakage of single-stranded DNA, followed by passage and rejoining.. Functionally, releases the supercoiling and torsional tension of DNA introduced during the DNA replication and transcription by transiently cleaving and rejoining one strand of the DNA duplex. Introduces a single-strand break via transesterification at a target site in duplex DNA. The scissile phosphodiester is attacked by the catalytic tyrosine of the enzyme, resulting in the formation of a DNA-(3'-phosphotyrosyl)-enzyme intermediate and the expulsion of a 5'-OH DNA strand. TThe free DNA strand then rotates around the intact phosphodiester bond on the opposing strand, thus removing DNA supercoils. Finally, in the religation step, the DNA 5'-OH attacks the covalent intermediate to expel the active-site tyrosine and restore the DNA phosphodiester backbone. May play a role in the circadian transcription of the core circadian clock component BMAL1. The sequence is that of DNA topoisomerase 1 (top1) from Xenopus laevis (African clawed frog).